A 299-amino-acid chain; its full sequence is MSDSYSRPIIAFMSDLGTTDDSVAQCKGLMMSICQDVTVVDVCHSMEPWNVEEGARYIVDLPRFFPEGTVFATTTYPATGTTARSVAVRIKYPAKGGARGQWAGSGEGFERSEGSYIYIAPNNGLLTTVLQEHGYTEAYEVSSTDVVPARPEPTFYSREMVAIPSAHLAAGYPLEKVGRKLQDSEIVRFTPPQATVSPEGDLSGVVTAIDHPFGNIWTSIHRDNLESAGVGYGTNLKIVLDDVFPFELPLSPTFADAGEVGDPVVYVNSRGYLSLARNAASLAYPYNLKEGMSVRVTRS.

S-adenosyl-L-methionine contacts are provided by residues D15, 20–22 (DDS), Y76, S157, D210, N215, 269–270 (SR), and 277–279 (RNA).

Belongs to the SAM hydrolase / SAM-dependent halogenase family.

The enzyme catalyses fluoride + S-adenosyl-L-methionine = 5'-deoxy-5'-fluoroadenosine + L-methionine. Activity is not severely affected by most metal ions (Mg(2+), Mn(2+), Co(2+) and Fe(2+)), but both Cu(2+) and Zn(2+) are strong inhibitors. Its function is as follows. Catalyzes the formation of a C-F bond by combining S-adenosyl-L-methionine (SAM) and fluoride to generate 5'-fluoro-5'-deoxyadenosine (5'-FDA) and L-methionine. In Actinopolyspora mzabensis, this protein is Fluorinase.